A 148-amino-acid polypeptide reads, in one-letter code: uncharacterized protein (148 aa).

The tract at residues 83–148 is disordered; the sequence is QPAVIPPVKA…TKKSNKKTRS (66 aa). Basic residues-rich tracts occupy residues 92–103 and 113–124; these read AKPKATKKKTPV and KQTKPKQSKPKS.

This is an uncharacterized protein from Mycoplasma genitalium (strain ATCC 33530 / DSM 19775 / NCTC 10195 / G37) (Mycoplasmoides genitalium).